The primary structure comprises 354 residues: Lipoyl synthase, mitochondrial (354 aa).

Cysteine 91, cysteine 96, cysteine 102, cysteine 122, cysteine 126, cysteine 129, and serine 337 together coordinate [4Fe-4S] cluster. Residues 107 to 326 (DDSLATATIM…AEYSKKLGFL (220 aa)) enclose the Radical SAM core domain.

This sequence belongs to the radical SAM superfamily. Lipoyl synthase family. It depends on [4Fe-4S] cluster as a cofactor.

It localises to the mitochondrion. The catalysed reaction is [[Fe-S] cluster scaffold protein carrying a second [4Fe-4S](2+) cluster] + N(6)-octanoyl-L-lysyl-[protein] + 2 oxidized [2Fe-2S]-[ferredoxin] + 2 S-adenosyl-L-methionine + 4 H(+) = [[Fe-S] cluster scaffold protein] + N(6)-[(R)-dihydrolipoyl]-L-lysyl-[protein] + 4 Fe(3+) + 2 hydrogen sulfide + 2 5'-deoxyadenosine + 2 L-methionine + 2 reduced [2Fe-2S]-[ferredoxin]. The protein operates within protein modification; protein lipoylation via endogenous pathway; protein N(6)-(lipoyl)lysine from octanoyl-[acyl-carrier-protein]: step 2/2. Its function is as follows. Catalyzes the radical-mediated insertion of two sulfur atoms into the C-6 and C-8 positions of the octanoyl moiety bound to the lipoyl domains of lipoate-dependent enzymes, thereby converting the octanoylated domains into lipoylated derivatives. In Caenorhabditis elegans, this protein is Lipoyl synthase, mitochondrial.